The following is a 530-amino-acid chain: Ankyrin repeat domain-containing protein 53 (530 aa).

Residues 1–15 (MASAGSTARRAGSGS) show a composition bias toward low complexity. The segment at 1-99 (MASAGSTARR…PSPSKESDQT (99 aa)) is disordered. Polar residues predominate over residues 32–41 (PSGSMQQANK). 3 ANK repeats span residues 139–169 (KGFT…PVDL), 173–206 (NSQT…DLNA), and 210–239 (NGST…NVHA). Disordered stretches follow at residues 323 to 360 (GHSL…VDAR) and 383 to 402 (PTMW…QISH). Composition is skewed to polar residues over residues 326-341 (LVSN…LSKT) and 386-402 (WNVS…QISH).

As to quaternary structure, interacts with PSRC1; recruited by PSRC1 to the spindle during mitosis. In terms of processing, phosphorylated during mitosis.

It localises to the cytoplasm. Its subcellular location is the cytoskeleton. The protein localises to the spindle. It is found in the spindle pole. In terms of biological role, required for normal progression through mitosis. Involved in chromosome alignment and cytokinesis via regulation of microtubules polymerization. In Homo sapiens (Human), this protein is Ankyrin repeat domain-containing protein 53 (ANKRD53).